A 225-amino-acid polypeptide reads, in one-letter code: NAD(P)H-quinone oxidoreductase subunit K, chloroplastic (225 aa).

The [4Fe-4S] cluster site is built by Cys-43, Cys-44, Cys-108, and Cys-139.

The protein belongs to the complex I 20 kDa subunit family. NDH is composed of at least 16 different subunits, 5 of which are encoded in the nucleus. The cofactor is [4Fe-4S] cluster.

It localises to the plastid. Its subcellular location is the chloroplast thylakoid membrane. The enzyme catalyses a plastoquinone + NADH + (n+1) H(+)(in) = a plastoquinol + NAD(+) + n H(+)(out). It carries out the reaction a plastoquinone + NADPH + (n+1) H(+)(in) = a plastoquinol + NADP(+) + n H(+)(out). Functionally, NDH shuttles electrons from NAD(P)H:plastoquinone, via FMN and iron-sulfur (Fe-S) centers, to quinones in the photosynthetic chain and possibly in a chloroplast respiratory chain. The immediate electron acceptor for the enzyme in this species is believed to be plastoquinone. Couples the redox reaction to proton translocation, and thus conserves the redox energy in a proton gradient. The protein is NAD(P)H-quinone oxidoreductase subunit K, chloroplastic of Lepidium virginicum (Virginia pepperweed).